Reading from the N-terminus, the 259-residue chain is MKKLALLGALALSVLSLPTFAADKPVRIGIEAAYPPFSLKTPDGQLAGFDVDIGNALCEEMKVQCKWVEQEFDGLIPALKVRKIDAILSSMTITDERKRSVDFTNKYYNTPARFVMKEGASLNDPKADLKGKKAGVLRGSTADRYASAELTPAGVEVVRYNSQQEANMDLVAGRLDAVVADSVNLEDGFLKTDAGKGYAFVGPQLTDAKYFGEGVGIAVRKGDSELAGKFNAAIDALRANGKYKQIQDKYFSFDVYGSN.

A signal peptide spans 1–21; sequence MKKLALLGALALSVLSLPTFA.

This sequence belongs to the bacterial solute-binding protein 3 family.

The protein resides in the periplasm. Binds L-arginine with high affinity. Shows no measurable affinity for L-ornithine. This Pseudomonas aeruginosa (strain ATCC 15692 / DSM 22644 / CIP 104116 / JCM 14847 / LMG 12228 / 1C / PRS 101 / PAO1) protein is L-arginine-binding protein.